The primary structure comprises 63 residues: Prokaryotic ubiquitin-like protein Pup (63 aa).

The disordered stretch occupies residues 1 to 28; that stretch reads MSDRQTQIPAGGGREDDHDDQVQSAGQV. Positions 19 to 57 are ARC ATPase binding; it reads DDQVQSAGQVQVNTEGVDDLLDEIDGLLENNAEEFVRSY. Residue glutamate 63 forms an Isoglutamyl lysine isopeptide (Glu-Lys) (interchain with K-? in acceptor proteins) linkage.

This sequence belongs to the prokaryotic ubiquitin-like protein family. As to quaternary structure, strongly interacts with the proteasome-associated ATPase ARC through a hydrophobic interface; the interacting region of Pup lies in its C-terminal half. There is one Pup binding site per ARC hexamer ring.

Its pathway is protein degradation; proteasomal Pup-dependent pathway. Its function is as follows. Protein modifier that is covalently attached to lysine residues of substrate proteins, thereby targeting them for proteasomal degradation. The tagging system is termed pupylation. This is Prokaryotic ubiquitin-like protein Pup from Corynebacterium efficiens (strain DSM 44549 / YS-314 / AJ 12310 / JCM 11189 / NBRC 100395).